Consider the following 96-residue polypeptide: Protein transport protein Sec61 subunit beta (96 aa).

A compositionally biased stretch (polar residues) spans 1 to 17 (MPGPTPSGTNVGSSGRS). The interval 1–54 (MPGPTPSGTNVGSSGRSPSKAVAARAAGSTVRQRKNASCGTRSAGRTTSAGTGG) is disordered. Pro2 carries the post-translational modification N-acetylproline. Topologically, residues 2 to 70 (PGPTPSGTNV…EDSPGLKVGP (69 aa)) are cytoplasmic. Ser7 is subject to Phosphoserine. Thr9 bears the Phosphothreonine mark. Residues Ser13, Ser14, and Ser17 each carry the phosphoserine modification. Cys39 carries the S-palmitoyl cysteine lipid modification. Residues 40-50 (GTRSAGRTTSA) are compositionally biased toward low complexity. A helical membrane pass occupies residues 71-91 (VPVLVMSLLFIAAVFMLHIWG).

Belongs to the SEC61-beta family. As to quaternary structure, the SEC61 channel-forming translocon complex consists of channel-forming core components SEC61A1, SEC61B and SEC61G and different auxiliary components such as SEC62 and SEC63. The SEC61 channel associates with the multi-pass translocon (MPT) complex. Interacts with TRAM1.

Its subcellular location is the endoplasmic reticulum membrane. Component of SEC61 channel-forming translocon complex that mediates transport of signal peptide-containing precursor polypeptides across the endoplasmic reticulum (ER). Forms a ribosome receptor and a gated pore in the ER membrane, both functions required for cotranslational translocation of nascent polypeptides. The SEC61 channel is also involved in ER membrane insertion of transmembrane proteins: it mediates membrane insertion of the first few transmembrane segments of proteins, while insertion of subsequent transmembrane regions of multi-pass membrane proteins is mediated by the multi-pass translocon (MPT) complex. The SEC61 channel cooperates with the translocating protein TRAM1 to import nascent proteins into the ER. Required for PKD1/Polycystin-1 biogenesis. The chain is Protein transport protein Sec61 subunit beta from Mus musculus (Mouse).